The chain runs to 411 residues: DSEFAELKIRGKIFKLPILKASIGEDVINISRVSAEADCFTYDPGFMSTASCQSTITYIDGDKGILRHRGYDIKDLAEKSDFLEVAYLLIYGELPSSEQYNNFTKQVAHHSLVNERLHYLFQTFCSSSHPMAIMLAAVGSLSAFYPDLLNCKEADYKLTAIRMIAKIPTIAAMSYKYSIGQPFIYPDNSLDFTENFLHMMFATPCTKYKVNPIIKNALNKIFILHADHEQNASTSTVRIAGSSGANPFACISTGIASLWGPAHGGANEAVINMLKEIGSSENIPKYIAKAKDKNDPFRLIGFGHRVYKNYDPRAAVLKETCKEVLKELGQLENNPLLQIAIELEAIALKDEYFIERKLYPNVDFYSGIIYKAMGIPSQMFTVLFAIARTIGWMAQWKEMHGDPEQKISRPR.

Catalysis depends on residues His304 and Asp363.

This sequence belongs to the citrate synthase family.

It catalyses the reaction oxaloacetate + acetyl-CoA + H2O = citrate + CoA + H(+). Its pathway is carbohydrate metabolism; tricarboxylic acid cycle; isocitrate from oxaloacetate: step 1/2. This chain is Citrate synthase (gltA), found in Rickettsia helvetica.